The primary structure comprises 497 residues: Galactose/methyl galactoside import ATP-binding protein MglA 1 (497 aa).

ABC transporter domains follow at residues 6–243 and 256–494; these read LEMR…VGRD and GKVR…VMSM. Position 38 to 45 (38 to 45) interacts with ATP; it reads GENGAGKS.

The protein belongs to the ABC transporter superfamily. Galactose/methyl galactoside importer (TC 3.A.1.2.3) family. In terms of assembly, the complex is composed of one ATP-binding protein (MglA), two transmembrane proteins (MglC) and a solute-binding protein (MglB).

Its subcellular location is the cell inner membrane. It catalyses the reaction D-galactose(out) + ATP + H2O = D-galactose(in) + ADP + phosphate + H(+). The enzyme catalyses methyl beta-D-galactoside(out) + ATP + H2O = methyl beta-D-galactoside(in) + ADP + phosphate + H(+). Part of the ABC transporter complex MglABC involved in galactose/methyl galactoside import. Responsible for energy coupling to the transport system. The sequence is that of Galactose/methyl galactoside import ATP-binding protein MglA 1 from Photobacterium profundum (strain SS9).